The sequence spans 212 residues: Large ribosomal subunit protein uL1 (212 aa).

The protein belongs to the universal ribosomal protein uL1 family. Part of the 50S ribosomal subunit.

Binds directly to 23S rRNA. Probably involved in E site tRNA release. In terms of biological role, protein L1 is also a translational repressor protein, it controls the translation of its operon by binding to its mRNA. The polypeptide is Large ribosomal subunit protein uL1 (Methanothermobacter thermautotrophicus (strain ATCC 29096 / DSM 1053 / JCM 10044 / NBRC 100330 / Delta H) (Methanobacterium thermoautotrophicum)).